The primary structure comprises 123 residues: Small ribosomal subunit protein uS12 (123 aa).

Asp-89 carries the 3-methylthioaspartic acid modification. The tract at residues 100 to 123 (GSLDTSGVKDRKQGRSKYGAKRPK) is disordered. A compositionally biased stretch (basic residues) spans 113-123 (GRSKYGAKRPK).

The protein belongs to the universal ribosomal protein uS12 family. In terms of assembly, part of the 30S ribosomal subunit. Contacts proteins S8 and S17. May interact with IF1 in the 30S initiation complex.

In terms of biological role, with S4 and S5 plays an important role in translational accuracy. Interacts with and stabilizes bases of the 16S rRNA that are involved in tRNA selection in the A site and with the mRNA backbone. Located at the interface of the 30S and 50S subunits, it traverses the body of the 30S subunit contacting proteins on the other side and probably holding the rRNA structure together. The combined cluster of proteins S8, S12 and S17 appears to hold together the shoulder and platform of the 30S subunit. In Pseudomonas aeruginosa (strain LESB58), this protein is Small ribosomal subunit protein uS12.